A 357-amino-acid chain; its full sequence is MKYDNLLDATSQYGPQDLLLGRDGLISTGYWAKTQANILTGTGLPVSNDEMKTYLNLPKNVEIPQDFQKLYDVYNEYKKLCDWWLEKLLSCVNKMANDIYNVGSTTSELINEALQPGLRAITTASNDQDRQDAIQDFHEVCLILMRELDENQQSMKDVQNLLNSFLQGGNNFIGVTQLNNSFEEVMTYLDSQYNDESEIHDLLNIFMQFKKLLGESLEEHEINEKVKFSSELGPLIGYIVSEMLEYSDVQMFKQRIDNFQNLNGVDAQVALVVKVLSLFHGINIDLHNVIYQAERSLEFIEQTEGNWHSIANQFYSLAQGFENEDINKLSTDLDNAAATWEAVANKAKEFVTNSYQG.

This sequence belongs to the cry6A endotoxin family.

This is SPbeta prophage-derived pesticidal crystal protein-like YokG (yokG) from Bacillus subtilis (strain 168).